The sequence spans 414 residues: Esterase FrsA (414 aa).

Belongs to the FrsA family.

It carries out the reaction a carboxylic ester + H2O = an alcohol + a carboxylate + H(+). Functionally, catalyzes the hydrolysis of esters. The chain is Esterase FrsA from Klebsiella pneumoniae subsp. pneumoniae (strain ATCC 700721 / MGH 78578).